The sequence spans 174 residues: MKLHDLKPAPGAHRERKRIGRGIGSGKGKTGGKGMMGQKARSGPKPSPSFEGGQMRITRKMPKLRGFKNRWRVEYQVINIGQLNDVPDGTELTIEEMVAQGWIHPAKPVKILGDGELERKLTIHAHKFSASARARIEAAGGAAIETPWVVERRSRSRGPNPPRHSRKAETPQKA.

Disordered regions lie at residues 1-57 (MKLH…QMRI) and 147-174 (PWVV…PQKA). Positions 21–35 (RGIGSGKGKTGGKGM) are enriched in gly residues.

This sequence belongs to the universal ribosomal protein uL15 family. In terms of assembly, part of the 50S ribosomal subunit.

In terms of biological role, binds to the 23S rRNA. The sequence is that of Large ribosomal subunit protein uL15 from Roseiflexus sp. (strain RS-1).